Reading from the N-terminus, the 229-residue chain is Elongation factor 1-delta 1 (229 aa).

A disordered region spans residues 80–109 (ESTAVPSASTPDVADAKAPAADDDDDDDVD). Positions 100-109 (ADDDDDDDVD) are enriched in acidic residues.

Belongs to the EF-1-beta/EF-1-delta family. As to quaternary structure, EF-1 is composed of 4 subunits: alpha, beta (1B-alpha=beta'), delta (1B-beta), and gamma (1B-gamma).

Its function is as follows. EF-1-beta and EF-1-beta' stimulate the exchange of GDP bound to EF-1-alpha to GTP. This is Elongation factor 1-delta 1 from Oryza sativa subsp. japonica (Rice).